The primary structure comprises 124 residues: Large ribosomal subunit protein uL22 (124 aa).

The protein belongs to the universal ribosomal protein uL22 family. Part of the 50S ribosomal subunit.

Its function is as follows. This protein binds specifically to 23S rRNA; its binding is stimulated by other ribosomal proteins, e.g. L4, L17, and L20. It is important during the early stages of 50S assembly. It makes multiple contacts with different domains of the 23S rRNA in the assembled 50S subunit and ribosome. The globular domain of the protein is located near the polypeptide exit tunnel on the outside of the subunit, while an extended beta-hairpin is found that lines the wall of the exit tunnel in the center of the 70S ribosome. The polypeptide is Large ribosomal subunit protein uL22 (Synechococcus sp. (strain JA-2-3B'a(2-13)) (Cyanobacteria bacterium Yellowstone B-Prime)).